Reading from the N-terminus, the 492-residue chain is Ketol-acid reductoisomerase (NADP(+)) (492 aa).

The 194-residue stretch at 15–208 (AQLGKCRFMA…GGHRAGVLES (194 aa)) folds into the KARI N-terminal Rossmann domain. Residues 45–48 (CGAQ), Arg68, Arg76, Ser78, and 108–110 (DKQ) contribute to the NADP(+) site. His132 is a catalytic residue. Residue Gly158 participates in NADP(+) binding. KARI C-terminal knotted domains lie at 209–344 (SFVA…TAAQ) and 345–485 (FEGK…MTDM). Mg(2+) contacts are provided by Asp217, Glu221, Glu389, and Glu393. Ser414 is a substrate binding site.

The protein belongs to the ketol-acid reductoisomerase family. The cofactor is Mg(2+).

It catalyses the reaction (2R)-2,3-dihydroxy-3-methylbutanoate + NADP(+) = (2S)-2-acetolactate + NADPH + H(+). The enzyme catalyses (2R,3R)-2,3-dihydroxy-3-methylpentanoate + NADP(+) = (S)-2-ethyl-2-hydroxy-3-oxobutanoate + NADPH + H(+). The protein operates within amino-acid biosynthesis; L-isoleucine biosynthesis; L-isoleucine from 2-oxobutanoate: step 2/4. Its pathway is amino-acid biosynthesis; L-valine biosynthesis; L-valine from pyruvate: step 2/4. Functionally, involved in the biosynthesis of branched-chain amino acids (BCAA). Catalyzes an alkyl-migration followed by a ketol-acid reduction of (S)-2-acetolactate (S2AL) to yield (R)-2,3-dihydroxy-isovalerate. In the isomerase reaction, S2AL is rearranged via a Mg-dependent methyl migration to produce 3-hydroxy-3-methyl-2-ketobutyrate (HMKB). In the reductase reaction, this 2-ketoacid undergoes a metal-dependent reduction by NADPH to yield (R)-2,3-dihydroxy-isovalerate. The protein is Ketol-acid reductoisomerase (NADP(+)) of Erwinia tasmaniensis (strain DSM 17950 / CFBP 7177 / CIP 109463 / NCPPB 4357 / Et1/99).